A 283-amino-acid chain; its full sequence is Probable endonuclease 4 (283 aa).

Residues histidine 69, histidine 113, glutamate 148, aspartate 182, histidine 185, histidine 217, aspartate 230, histidine 232, and glutamate 262 each contribute to the Zn(2+) site.

Belongs to the AP endonuclease 2 family. Zn(2+) is required as a cofactor.

It catalyses the reaction Endonucleolytic cleavage to 5'-phosphooligonucleotide end-products.. In terms of biological role, endonuclease IV plays a role in DNA repair. It cleaves phosphodiester bonds at apurinic or apyrimidinic (AP) sites, generating a 3'-hydroxyl group and a 5'-terminal sugar phosphate. The chain is Probable endonuclease 4 from Bifidobacterium longum (strain NCC 2705).